A 216-amino-acid polypeptide reads, in one-letter code: DNA gyrase subunit B (216 aa).

The Toprim domain maps to 140 to 216; it reads SELFLVEGDS…PDKLRYHKIV (77 aa).

This sequence belongs to the type II topoisomerase GyrB family. Heterotetramer, composed of two GyrA and two GyrB chains. In the heterotetramer, GyrA contains the active site tyrosine that forms a transient covalent intermediate with DNA, while GyrB binds cofactors and catalyzes ATP hydrolysis.

The protein resides in the cytoplasm. The enzyme catalyses ATP-dependent breakage, passage and rejoining of double-stranded DNA.. A type II topoisomerase that negatively supercoils closed circular double-stranded (ds) DNA in an ATP-dependent manner to modulate DNA topology and maintain chromosomes in an underwound state. Negative supercoiling favors strand separation, and DNA replication, transcription, recombination and repair, all of which involve strand separation. Also able to catalyze the interconversion of other topological isomers of dsDNA rings, including catenanes and knotted rings. Type II topoisomerases break and join 2 DNA strands simultaneously in an ATP-dependent manner. The chain is DNA gyrase subunit B (gyrB) from Acinetobacter sp. (strain SEIP 12.81).